The chain runs to 543 residues: Glucose-6-phosphate isomerase (543 aa).

Glu-351 functions as the Proton donor in the catalytic mechanism. Catalysis depends on residues His-382 and Lys-511.

The protein belongs to the GPI family.

It is found in the cytoplasm. The catalysed reaction is alpha-D-glucose 6-phosphate = beta-D-fructose 6-phosphate. It functions in the pathway carbohydrate biosynthesis; gluconeogenesis. The protein operates within carbohydrate degradation; glycolysis; D-glyceraldehyde 3-phosphate and glycerone phosphate from D-glucose: step 2/4. Catalyzes the reversible isomerization of glucose-6-phosphate to fructose-6-phosphate. The sequence is that of Glucose-6-phosphate isomerase from Hydrogenovibrio crunogenus (strain DSM 25203 / XCL-2) (Thiomicrospira crunogena).